Consider the following 492-residue polypeptide: 2,3-bisphosphoglycerate-independent phosphoglycerate mutase (492 aa).

Asp-11 and Ser-61 together coordinate Mn(2+). The active-site Phosphoserine intermediate is Ser-61. Substrate-binding positions include His-118, 147–148 (RD), Arg-178, Arg-184, 248–251 (RNDR), and Lys-320. Mn(2+)-binding residues include Asp-386, His-390, Asp-427, His-428, and His-445.

The protein belongs to the BPG-independent phosphoglycerate mutase family. As to quaternary structure, monomer. Requires Mn(2+) as cofactor.

The catalysed reaction is (2R)-2-phosphoglycerate = (2R)-3-phosphoglycerate. The protein operates within carbohydrate degradation; glycolysis; pyruvate from D-glyceraldehyde 3-phosphate: step 3/5. Catalyzes the interconversion of 2-phosphoglycerate and 3-phosphoglycerate. The sequence is that of 2,3-bisphosphoglycerate-independent phosphoglycerate mutase from Campylobacter jejuni (strain RM1221).